Reading from the N-terminus, the 703-residue chain is Phosphoribosylformylglycinamidine synthase subunit PurL (703 aa).

His36 is a catalytic residue. Positions 39 and 80 each coordinate ATP. Residue Glu82 participates in Mg(2+) binding. Substrate-binding positions include 83-86 (SHNH) and Arg105. The active-site Proton acceptor is His84. Residue Asp106 participates in Mg(2+) binding. A substrate-binding site is contributed by Gln226. Mg(2+) is bound at residue Asp252. Substrate is bound at residue 294 to 296 (ETQ). Positions 468 and 505 each coordinate ATP. Ser508 contributes to the substrate binding site.

This sequence belongs to the FGAMS family. As to quaternary structure, monomer. Part of the FGAM synthase complex composed of 1 PurL, 1 PurQ and 2 PurS subunits.

Its subcellular location is the cytoplasm. It catalyses the reaction N(2)-formyl-N(1)-(5-phospho-beta-D-ribosyl)glycinamide + L-glutamine + ATP + H2O = 2-formamido-N(1)-(5-O-phospho-beta-D-ribosyl)acetamidine + L-glutamate + ADP + phosphate + H(+). It functions in the pathway purine metabolism; IMP biosynthesis via de novo pathway; 5-amino-1-(5-phospho-D-ribosyl)imidazole from N(2)-formyl-N(1)-(5-phospho-D-ribosyl)glycinamide: step 1/2. Functionally, part of the phosphoribosylformylglycinamidine synthase complex involved in the purines biosynthetic pathway. Catalyzes the ATP-dependent conversion of formylglycinamide ribonucleotide (FGAR) and glutamine to yield formylglycinamidine ribonucleotide (FGAM) and glutamate. The FGAM synthase complex is composed of three subunits. PurQ produces an ammonia molecule by converting glutamine to glutamate. PurL transfers the ammonia molecule to FGAR to form FGAM in an ATP-dependent manner. PurS interacts with PurQ and PurL and is thought to assist in the transfer of the ammonia molecule from PurQ to PurL. The chain is Phosphoribosylformylglycinamidine synthase subunit PurL from Sulfurisphaera tokodaii (strain DSM 16993 / JCM 10545 / NBRC 100140 / 7) (Sulfolobus tokodaii).